A 210-amino-acid polypeptide reads, in one-letter code: Probable GTP-binding protein EngB (210 aa).

Residues 25 to 199 enclose the EngB-type G domain; sequence CGIEVAFAGR…RQKLDSWFSE (175 aa). Residues 33 to 40, 60 to 64, 78 to 81, 145 to 148, and 178 to 180 each bind GTP; these read GRSNAGKS, GRTQL, DLPG, TKAD, and FSS. 2 residues coordinate Mg(2+): S40 and T62.

It belongs to the TRAFAC class TrmE-Era-EngA-EngB-Septin-like GTPase superfamily. EngB GTPase family. Mg(2+) serves as cofactor.

Functionally, necessary for normal cell division and for the maintenance of normal septation. This is Probable GTP-binding protein EngB from Salmonella agona (strain SL483).